Consider the following 273-residue polypeptide: MADAPSGPSVLSHYPGAGLAGEQQREEERHKGCHHHQLNGLISPDLRHLKAVSSLKNKLLEQKTRKDSGLVQPQGRTDTRAPNGLERLQGEEEKLSACLASCSLRGDGEALGNHVSQGENDDTIRYVRYESELQMADIMRLITRDLSEPYSIYTYRYFIHNWPQLCFLAMVGEECVGAIVCKLDMHKKMFRRGYIAMLAVDSKYRRKGIGTHLVKKAIYAMVEGDCDEVVLETEITNKSALKLYENLGFVRDKRLFRYYLNGVDALRLKLWLR.

Disordered regions lie at residues 1–39 (MADA…HQLN) and 62–85 (QKTR…PNGL). The 149-residue stretch at 125 to 273 (RYVRYESELQ…DALRLKLWLR (149 aa)) folds into the N-acetyltransferase domain.

It belongs to the acetyltransferase family. MAK3 subfamily. Component of the N-terminal acetyltransferase C (NatC) complex.

It is found in the cytoplasm. The protein localises to the nucleus. The enzyme catalyses N-terminal L-methionyl-L-leucyl-[protein] + acetyl-CoA = N-terminal N(alpha)-acetyl-L-methionyl-L-leucyl-[protein] + CoA + H(+). It catalyses the reaction N-terminal L-methionyl-L-isoleucyl-[protein] + acetyl-CoA = N-terminal N(alpha)-acetyl-L-methionyl-L-isoleucyl-[protein] + CoA + H(+). The catalysed reaction is N-terminal L-methionyl-L-phenylalanyl-[protein] + acetyl-CoA = N-terminal N(alpha)-acetyl-L-methionyl-L-phenylalanyl-[protein] + CoA + H(+). It carries out the reaction N-terminal L-methionyl-L-tryptophyl-[protein] + acetyl-CoA = N-terminal N(alpha)-acetyl-L-methionyl-L-tryptophyl-[protein] + CoA + H(+). The enzyme catalyses N-terminal L-methionyl-L-tyrosyl-[protein] + acetyl-CoA = N-terminal N(alpha)-acetyl-L-methionyl-L-tyrosyl-[protein] + CoA + H(+). In terms of biological role, catalytic subunit of the N-terminal acetyltransferase C (NatC) complex. Catalyzes acetylation of the N-terminal methionine residues of peptides beginning with Met-Leu-Ala and Met-Leu-Gly. N-terminal acetylation protects proteins from ubiquitination and degradation by the N-end rule pathway. This Xenopus laevis (African clawed frog) protein is N-alpha-acetyltransferase 30 (naa30).